A 169-amino-acid polypeptide reads, in one-letter code: Regulator of G-protein signaling rgs-2 (169 aa).

The RGS domain occupies 39–158; that stretch reads GWSQSFENLM…FLASNIYKTV (120 aa).

Post-translationally, may be phosphorylated and activated by egl-4. Expressed in a subset of neurons including ventral cord and head- and tail-ganglia neurons. Also expressed in non-neuronal cells including pharyngeal and uterine muscles.

Weakly inhibits G protein signaling in nervous system, interacting preferentially with the G(O) subfamily member goa-1. In vitro, it acts as a GTPase activator of goa-1. Rgs-1 and rgs-2 redundantly adjust signaling when worms are fed to allow rapid induction of egg-laying behavior. Modulates chemotaxis responses by regulating negatively the sensitivity to quinine in ASH sensory neurons. The polypeptide is Regulator of G-protein signaling rgs-2 (rgs-2) (Caenorhabditis elegans).